Consider the following 486-residue polypeptide: Glutamate--tRNA ligase (486 aa).

The 'HIGH' region signature appears at 12-22 (PSPTGTPHVGL). The short motif at 256-260 (KLSKR) is the 'KMSKS' region element. Lysine 259 lines the ATP pocket.

It belongs to the class-I aminoacyl-tRNA synthetase family. Glutamate--tRNA ligase type 1 subfamily. As to quaternary structure, monomer.

The protein resides in the cytoplasm. The catalysed reaction is tRNA(Glu) + L-glutamate + ATP = L-glutamyl-tRNA(Glu) + AMP + diphosphate. In terms of biological role, catalyzes the attachment of glutamate to tRNA(Glu) in a two-step reaction: glutamate is first activated by ATP to form Glu-AMP and then transferred to the acceptor end of tRNA(Glu). This is Glutamate--tRNA ligase from Mycolicibacterium smegmatis (strain ATCC 700084 / mc(2)155) (Mycobacterium smegmatis).